We begin with the raw amino-acid sequence, 299 residues long: ATP phosphoribosyltransferase (299 aa).

Belongs to the ATP phosphoribosyltransferase family. Long subfamily. It depends on Mg(2+) as a cofactor.

The protein resides in the cytoplasm. It catalyses the reaction 1-(5-phospho-beta-D-ribosyl)-ATP + diphosphate = 5-phospho-alpha-D-ribose 1-diphosphate + ATP. It participates in amino-acid biosynthesis; L-histidine biosynthesis; L-histidine from 5-phospho-alpha-D-ribose 1-diphosphate: step 1/9. Its activity is regulated as follows. Feedback inhibited by histidine. Its function is as follows. Catalyzes the condensation of ATP and 5-phosphoribose 1-diphosphate to form N'-(5'-phosphoribosyl)-ATP (PR-ATP). Has a crucial role in the pathway because the rate of histidine biosynthesis seems to be controlled primarily by regulation of HisG enzymatic activity. In Shewanella piezotolerans (strain WP3 / JCM 13877), this protein is ATP phosphoribosyltransferase.